A 503-amino-acid chain; its full sequence is Maturase K (503 aa).

It belongs to the intron maturase 2 family. MatK subfamily.

The protein resides in the plastid. It localises to the chloroplast. Its function is as follows. Usually encoded in the trnK tRNA gene intron. Probably assists in splicing its own and other chloroplast group II introns. The polypeptide is Maturase K (Callistemon polandii (Gold-tipped bottlebrush)).